The primary structure comprises 157 residues: Class-10 pathogenesis-related protein 1 (157 aa).

The protein belongs to the BetVI family. In terms of tissue distribution, expressed in roots. Detected in nodules and leaves, but not in stems and flowers.

This chain is Class-10 pathogenesis-related protein 1 (PR10-1), found in Medicago truncatula (Barrel medic).